The chain runs to 89 residues: Cell division protein ZapA (89 aa).

Belongs to the ZapA family. Type 2 subfamily. In terms of assembly, homodimer. Interacts with FtsZ.

It localises to the cytoplasm. Its function is as follows. Activator of cell division through the inhibition of FtsZ GTPase activity, therefore promoting FtsZ assembly into bundles of protofilaments necessary for the formation of the division Z ring. It is recruited early at mid-cell but it is not essential for cell division. This is Cell division protein ZapA from Bacillus thuringiensis (strain Al Hakam).